The following is a 289-amino-acid chain: CBY1-interacting BAR domain-containing protein 1 (289 aa).

The transit peptide at 1-47 directs the protein to the mitochondrion; that stretch reads MMRRTLENRNAQTKQLQTAVSNVEKHFGELCQIFAAYVRKTARLRDK. A BAR-like region spans residues 10–220; it reads NAQTKQLQTA…NIDEDEDLEV (211 aa). A coiled-coil region spans residues 107–178; the sequence is KMKRDDLKAT…INNFERQKMK (72 aa). A disordered region spans residues 265-289; that stretch reads LRKDQQAEDDEDDELDVTEEENFLK. Residues 271–289 are compositionally biased toward acidic residues; that stretch reads AEDDEDDELDVTEEENFLK.

This sequence belongs to the CIBAR family. As to quaternary structure, homodimer (via BAR-like domain). Heterodimer with FAM92B (via BAR-like domains). Interacts (via BAR-like domain) with CBY1; this interaction is required for targeting FAM92A to centriole and cilium basal body. Interacts (via BAR-like domain) with CBY3; both proteins form a ninefold symmetric structure at the flagellar base; are recruited to the annulus in a mutually dependent manner and regulate annulus positionning.

Its subcellular location is the cytoplasm. It localises to the cytoskeleton. The protein resides in the microtubule organizing center. It is found in the centrosome. The protein localises to the centriole. Its subcellular location is the cilium basal body. It localises to the cell projection. The protein resides in the cilium. It is found in the nucleus. The protein localises to the mitochondrion inner membrane. Its subcellular location is the flagellum. Functionally, plays a critical role in regulating mitochondrial ultrastructure and function by maintaining the integrity of mitochondrial morphology, particularly the organization of cristae. Preferentially binds to negatively charged phospholipids like cardiolipin and phosphatidylinositol 4,5-bisphosphate enhancing its interaction with mitochondrial membranes. Induces membrane curvature and tubulation, which are critical for maintaining mitochondrial ultrastructure and the organization of cristae. Plays a crucial role in ciliogenesis. May play a role in limb development through its role in ciliogenesis. Plays a key role in the correct positioning of the annulus, a septin-based ring structure in the sperm flagellum, serving both as a physical barrier and a membrane diffusion barrier that separates the midpiece (MP) from the principal piece (PP). This positioning is essential for proper sperm motility and function. Interacts with CBY3 to form a complex which localizes to the curved membrane region of the flagellar pocket. By doing so, may provide stability and rigidity to the periannular membrane to prevent membrane deformation. This function is crucial for halting annulus migration at the proximal end of the fibrous sheath-containing PP. The chain is CBY1-interacting BAR domain-containing protein 1 from Homo sapiens (Human).